The chain runs to 382 residues: MSLKEKTQSLFANAFGYPATHTIQAPGRVNLIGEHTDYNDGFVLPCAIDYQTVISCAPRDDRKVRVMAADYENQLDEFSLDAPIVAHENYQWANYVRGVVKHLQLRNNSFGGVDMVISGNVPQGAGLSSSASLEVAVGTVLQQLYHLPLDGAQIALNGQEAENQFVGCNCGIMDQLISALGKKDHALLIDCRSLGTKAVSMPKGVAVVIINSNFKRTLVGSEYNTRREQCETGARFFQQPALRDVTIEEFNAVAHELDPIVAKRVRHILTENARTVEAASALEQGDLKRMGELMAESHASMRDDFEITVPQIDTLVEIVKAVIGDKGGVRMTGGGFGGCIVALFPEELVPAVQQAVAEQYEAKTGIKETFYVCKPSQGAGQC.

Residue 34-37 coordinates substrate; sequence EHTD. ATP is bound at residue 124-130; the sequence is GAGLSSS. 2 residues coordinate Mg(2+): Ser130 and Glu162. Asp174 acts as the Proton acceptor in catalysis. A substrate-binding site is contributed by Tyr223.

It belongs to the GHMP kinase family. GalK subfamily.

It localises to the cytoplasm. It catalyses the reaction alpha-D-galactose + ATP = alpha-D-galactose 1-phosphate + ADP + H(+). Its pathway is carbohydrate metabolism; galactose metabolism. Its function is as follows. Catalyzes the transfer of the gamma-phosphate of ATP to D-galactose to form alpha-D-galactose-1-phosphate (Gal-1-P). The protein is Galactokinase of Escherichia coli O1:K1 / APEC.